A 368-amino-acid chain; its full sequence is tRNA/tmRNA (uracil-C(5))-methyltransferase (368 aa).

The S-adenosyl-L-methionine site is built by Gln-192, Tyr-220, Asn-225, Glu-241, and Asp-301. The active-site Nucleophile is the Cys-326. Glu-360 acts as the Proton acceptor in catalysis.

It belongs to the class I-like SAM-binding methyltransferase superfamily. RNA M5U methyltransferase family. TrmA subfamily.

It carries out the reaction uridine(54) in tRNA + S-adenosyl-L-methionine = 5-methyluridine(54) in tRNA + S-adenosyl-L-homocysteine + H(+). The enzyme catalyses uridine(341) in tmRNA + S-adenosyl-L-methionine = 5-methyluridine(341) in tmRNA + S-adenosyl-L-homocysteine + H(+). Dual-specificity methyltransferase that catalyzes the formation of 5-methyluridine at position 54 (m5U54) in all tRNAs, and that of position 341 (m5U341) in tmRNA (transfer-mRNA). The sequence is that of tRNA/tmRNA (uracil-C(5))-methyltransferase from Actinobacillus pleuropneumoniae serotype 7 (strain AP76).